The sequence spans 641 residues: MGKIIGIDLGTTNSCVSIMDGGKARVIENSEGDRTTPSIVAYTKDGEVLVGASAKRQAVTNPKNTFYAVKRLIGRKFTDAEVQKDISHVPYGILAHDNGDAWVQTSDAKRMAPQEISARVLEKMKKTAEDYLGEKVTEAVITVPAYFNDSQRQATKDAGRIAGLDVKRIINEPTAAALAYGLDKKGGDRKIAVYDLGGGTFDVSIIEIAEVDGEKQFEVLATNGDTFLGGEDFDNRVIEYLVDEFNKDQGIDLRKDPLALQRLKDAAERAKIELSSSQQTEVNLPYVTADASGPKHLNIKLTRAKLEALVEDLVKKSIEPCRTALNDAGLRASDINEVILVGGQTRMPKVQQAVADFFGKEPRKDVNPDEAVAVGAAIQGGVLAGDVKDVLLLDVTPLSLGIETMGGVFTKIIEKNTTIPTKASQTFSTAEDNQSAVTVHVLQGEREQARFNKSLAKFDLSGIEPAPRGMPQVEVSFDIDANGILHVSAKDKKTNKEQKVEIKAGSGLSDEEIQRMVADAEANREEDKKFHELVQARNQADGLIHATRTAITEHGSKVGGDVIGKVEAALSDLETAMKGDDKAQIEARTKTLEEAGQSLYAAAAAAEQGGSADAASGNAQASKAADDVVDAEFTEVKDDKK.

Thr-200 is subject to Phosphothreonine; by autocatalysis. The segment covering 605-623 (AAEQGGSADAASGNAQASK) has biased composition (low complexity). Positions 605 to 627 (AAEQGGSADAASGNAQASKAADD) are disordered.

This sequence belongs to the heat shock protein 70 family.

Its function is as follows. Acts as a chaperone. In Xanthomonas oryzae pv. oryzae (strain MAFF 311018), this protein is Chaperone protein DnaK.